The primary structure comprises 142 residues: Cell wall-binding protein YqgA (142 aa).

The first 28 residues, Met-1–Ala-28, serve as a signal peptide directing secretion.

Found in a complex with F(1)F(0) ATP synthase and SpoIIIJ and YqjG.

The protein localises to the secreted. It localises to the cell wall. The polypeptide is Cell wall-binding protein YqgA (yqgA) (Bacillus subtilis (strain 168)).